Consider the following 98-residue polypeptide: Large ribosomal subunit protein uL23 (98 aa).

Belongs to the universal ribosomal protein uL23 family. Part of the 50S ribosomal subunit. Contacts protein L29, and trigger factor when it is bound to the ribosome.

Its function is as follows. One of the early assembly proteins it binds 23S rRNA. One of the proteins that surrounds the polypeptide exit tunnel on the outside of the ribosome. Forms the main docking site for trigger factor binding to the ribosome. This chain is Large ribosomal subunit protein uL23, found in Hahella chejuensis (strain KCTC 2396).